A 644-amino-acid polypeptide reads, in one-letter code: NADH-ubiquinone oxidoreductase chain 5 (644 aa).

18 helical membrane-spanning segments follow: residues 4–23 (FITL…RYIG), 30–49 (LNII…YINI), 78–100 (DLLS…IFAW), 112–129 (FYTY…LVLG), 133–155 (LILF…FWYN), 167–189 (LFIN…YIYK), 199–221 (LVSY…AASA), 234–256 (WAMA…IAGI), 271–293 (NILL…IAIN), 300–322 (IIAL…SSYN), 327–349 (HVLC…IHSL), 361–383 (GLLI…LMGL), 398–420 (SSIG…SSLL), 466–488 (SWMA…YLLQ), 517–539 (INIY…IIYL), 546–568 (LLYI…RFLF), 594–616 (GFLY…FNII), and 623–642 (FNHY…YLQF).

It belongs to the complex I subunit 5 family.

It localises to the mitochondrion inner membrane. The catalysed reaction is a ubiquinone + NADH + 5 H(+)(in) = a ubiquinol + NAD(+) + 4 H(+)(out). Functionally, core subunit of the mitochondrial membrane respiratory chain NADH dehydrogenase (Complex I) that is believed to belong to the minimal assembly required for catalysis. Complex I functions in the transfer of electrons from NADH to the respiratory chain. The immediate electron acceptor for the enzyme is believed to be ubiquinone. In Wickerhamomyces canadensis (Yeast), this protein is NADH-ubiquinone oxidoreductase chain 5 (ND5).